The primary structure comprises 201 residues: Recombination protein RecR (201 aa).

A C4-type zinc finger spans residues 60-75 (CSRCGNVDTVDPCTVC). The 96-residue stretch at 83-178 (SIIIVVEDVS…KITRLAHGVP (96 aa)) folds into the Toprim domain.

Belongs to the RecR family.

In terms of biological role, may play a role in DNA repair. It seems to be involved in an RecBC-independent recombinational process of DNA repair. It may act with RecF and RecO. The polypeptide is Recombination protein RecR (Rhizobium leguminosarum bv. trifolii (strain WSM2304)).